We begin with the raw amino-acid sequence, 166 residues long: Small ribosomal subunit protein uS5 (166 aa).

The S5 DRBM domain maps to 11–74 (LQEKLIAVNR…EQAKRNLSKV (64 aa)).

Belongs to the universal ribosomal protein uS5 family. In terms of assembly, part of the 30S ribosomal subunit. Contacts proteins S4 and S8.

Functionally, with S4 and S12 plays an important role in translational accuracy. Its function is as follows. Located at the back of the 30S subunit body where it stabilizes the conformation of the head with respect to the body. The sequence is that of Small ribosomal subunit protein uS5 from Aeromonas salmonicida (strain A449).